The following is a 3753-amino-acid chain: Intermembrane lipid transfer protein VPS13C (3753 aa).

The Chorein N-terminal domain occupies 3-116; the sequence is LESVVADLLN…LQDVKQKELS (114 aa). The residue at position 132 (Ser132) is a Phosphoserine. A compositionally biased stretch (basic residues) spans 150 to 164; the sequence is GRKRKKHKKHFKKPF. The disordered stretch occupies residues 150 to 176; the sequence is GRKRKKHKKHFKKPFKGLDRSKDKPKE. Over residues 165-176 the composition is skewed to basic and acidic residues; sequence KGLDRSKDKPKE. Thr614 carries the post-translational modification Phosphothreonine. Ser619 carries the phosphoserine modification. Position 624 is a phosphothreonine (Thr624). Ser737, Ser842, Ser872, and Ser874 each carry phosphoserine. An FFAT motif is present at residues 877 to 883; that stretch reads EYFDAED. Phosphoserine is present on residues Ser1979 and Ser2473. Residues 2415 to 3309 are required for late endosome/lysosome localization; the sequence is DYSLKDRAPF…IQQDIDALNA (895 aa). Residues 2766 to 3016 enclose the SHR-BD domain; the sequence is LSVFSPYWLI…RLFAWADPTG (251 aa). Residues 3310-3753 form a required for lipid droplet localization region; that stretch reads ELMETSMTDM…VRLLRPQLPS (444 aa). Residues Arg3519 and Arg3526 each carry the omega-N-methylarginine modification. Position 3538 is an N6-acetyllysine (Lys3538). Ser3641 is subject to Phosphoserine.

It belongs to the VPS13 family. In terms of tissue distribution, widely expressed.

The protein resides in the mitochondrion outer membrane. It localises to the lipid droplet. It is found in the endoplasmic reticulum membrane. The protein localises to the lysosome membrane. Its subcellular location is the late endosome membrane. Mediates the transfer of lipids between membranes at organelle contact sites. Necessary for proper mitochondrial function and maintenance of mitochondrial transmembrane potential. Involved in the regulation of PINK1/PRKN-mediated mitophagy in response to mitochondrial depolarization. In Homo sapiens (Human), this protein is Intermembrane lipid transfer protein VPS13C.